A 286-amino-acid polypeptide reads, in one-letter code: 4-diphosphocytidyl-2-C-methyl-D-erythritol kinase (286 aa).

Lys13 is a catalytic residue. An ATP-binding site is contributed by 99–109 (PMGGGLGGGSS). Residue Asp141 is part of the active site.

The protein belongs to the GHMP kinase family. IspE subfamily.

It carries out the reaction 4-CDP-2-C-methyl-D-erythritol + ATP = 4-CDP-2-C-methyl-D-erythritol 2-phosphate + ADP + H(+). The protein operates within isoprenoid biosynthesis; isopentenyl diphosphate biosynthesis via DXP pathway; isopentenyl diphosphate from 1-deoxy-D-xylulose 5-phosphate: step 3/6. Functionally, catalyzes the phosphorylation of the position 2 hydroxy group of 4-diphosphocytidyl-2C-methyl-D-erythritol. The chain is 4-diphosphocytidyl-2-C-methyl-D-erythritol kinase from Herminiimonas arsenicoxydans.